The sequence spans 95 residues: Large ribosomal subunit protein uL23 (95 aa).

It belongs to the universal ribosomal protein uL23 family. Part of the 50S ribosomal subunit. Contacts protein L29, and trigger factor when it is bound to the ribosome.

Its function is as follows. One of the early assembly proteins it binds 23S rRNA. One of the proteins that surrounds the polypeptide exit tunnel on the outside of the ribosome. Forms the main docking site for trigger factor binding to the ribosome. The chain is Large ribosomal subunit protein uL23 from Geobacillus thermodenitrificans (strain NG80-2).